Consider the following 309-residue polypeptide: MAKTYIFGHKNPDTDAISSAIIMADFEQQTGNAEATAYRLGEVGPETQYALDHFNVTAPELLNDDLADQNVILVDHNEFQQSADSIADAAVQHVVDHHRIANFETAAPLYYRAEPVGCTATILYKMYKERGFEIKPEIAGLMISAIISDSLLFKSPTCTEQDVQAAEALKSIANVDLESYGLEMLKAGASTKDKSVSDILSMDAKSFNMGDFVTRIGQVNTVDIDEVFARQEELEKEMLEVSANEKYDLFVLVVTDIINSDSKILVVGAEKDKVGVAFNVTLDNNTAFLPGVVSRKKQVVPQITEALTK.

Mn(2+) is bound by residues histidine 9, aspartate 13, aspartate 15, aspartate 75, histidine 97, and aspartate 149.

Belongs to the PPase class C family. It depends on Mn(2+) as a cofactor.

The protein resides in the cytoplasm. The catalysed reaction is diphosphate + H2O = 2 phosphate + H(+). The chain is Probable manganese-dependent inorganic pyrophosphatase from Staphylococcus saprophyticus subsp. saprophyticus (strain ATCC 15305 / DSM 20229 / NCIMB 8711 / NCTC 7292 / S-41).